The primary structure comprises 412 residues: Class E basic helix-loop-helix protein 40 (412 aa).

The disordered stretch occupies residues 1–21 (MERIPSAQPPPTCLPKAPGLE). Residues 1-139 (MERIPSAQPP…LSGRNVEAGQ (139 aa)) are essential for interaction with BMAL1, E-box binding and repressor activity against the CLOCK-BMAL1 heterodimer. Residues 52-107 (TYKLPHRLIEKKRRDRINECIAQLKDLLPEHLKLTTLGHLEKAVVLELTLKHVKAL) enclose the bHLH domain. The interval 75-79 (LKDLL) is necessary for interaction with RXRA and repressor activity against RXRA. An Orange domain is found at 142–175 (FCSGFQTCAREVLQYLAKHENTRDLKSSQLVTHL). Lys159 is covalently cross-linked (Glycyl lysine isopeptide (Lys-Gly) (interchain with G-Cter in SUMO1, SUMO2 and SUMO3)). Lys167 is covalently cross-linked (Glycyl lysine isopeptide (Lys-Gly) (interchain with G-Cter in SUMO2)). Disordered regions lie at residues 182–256 (LLQG…ELRV) and 279–298 (KQES…SDDE). Ser235 carries the post-translational modification Phosphoserine. Lys279 is covalently cross-linked (Glycyl lysine isopeptide (Lys-Gly) (interchain with G-Cter in SUMO1); alternate). Lys279 is covalently cross-linked (Glycyl lysine isopeptide (Lys-Gly) (interchain with G-Cter in SUMO1, SUMO2 and SUMO3); alternate). Lys279 participates in a covalent cross-link: Glycyl lysine isopeptide (Lys-Gly) (interchain with G-Cter in SUMO2); alternate. Lys288 participates in a covalent cross-link: Glycyl lysine isopeptide (Lys-Gly) (interchain with G-Cter in SUMO2). The residue at position 383 (Ser383) is a Phosphoserine.

As to quaternary structure, homodimer. Heterodimer with BHLHE41/DEC2. Interacts with TCF3/E47. Interacts with ubiquitin-conjugating enzyme UBE2I/UBC9. Interacts with HDAC1, SUMO1, RXRA and BMAL1. Ubiquitinated; which may lead to proteasomal degradation. Post-translationally, sumoylation inhibits its ubiquitination and promotes its negative regulation of the CLOCK-BMAL1 heterodimer transcriptional activator activity.

It is found in the cytoplasm. Its subcellular location is the nucleus. Transcriptional repressor involved in the regulation of the circadian rhythm by negatively regulating the activity of the clock genes and clock-controlled genes. Acts as the negative limb of a novel autoregulatory feedback loop (DEC loop) which differs from the one formed by the PER and CRY transcriptional repressors (PER/CRY loop). Both these loops are interlocked as it represses the expression of PER1/2 and in turn is repressed by PER1/2 and CRY1/2. Represses the activity of the circadian transcriptional activator: CLOCK-BMAL1|BMAL2 heterodimer by competing for the binding to E-box elements (5'-CACGTG-3') found within the promoters of its target genes. Negatively regulates its own expression and the expression of DBP and BHLHE41/DEC2. Acts as a corepressor of RXR and the RXR-LXR heterodimers and represses the ligand-induced RXRA and NR1H3/LXRA transactivation activity. May be involved in the regulation of chondrocyte differentiation via the cAMP pathway. Represses the transcription of NR0B2 and attentuates the transactivation of NR0B2 by the CLOCK-BMAL1 complex. Drives the circadian rhythm of blood pressure through transcriptional repression of ATP1B1 in the cardiovascular system. The chain is Class E basic helix-loop-helix protein 40 (BHLHE40) from Bos taurus (Bovine).